Here is a 271-residue protein sequence, read N- to C-terminus: Phosphatidylinositol transfer protein beta isoform (271 aa).

K215 is subject to N6-acetyllysine. S262 is subject to Phosphoserine.

This sequence belongs to the PtdIns transfer protein family. PI transfer class I subfamily. Post-translationally, constitutive phosphorylation of Ser-262 has no effect on phospholipid transfer activity but is required for Golgi targeting.

It is found in the golgi apparatus. Its subcellular location is the golgi apparatus membrane. The protein resides in the endoplasmic reticulum membrane. It carries out the reaction a 1,2-diacyl-sn-glycero-3-phosphocholine(in) = a 1,2-diacyl-sn-glycero-3-phosphocholine(out). The enzyme catalyses a 1,2-diacyl-sn-glycero-3-phospho-(1D-myo-inositol)(in) = a 1,2-diacyl-sn-glycero-3-phospho-(1D-myo-inositol)(out). It catalyses the reaction an N-(acyl)-sphingosylphosphocholine(in) = an N-(acyl)-sphingosylphosphocholine(out). Its function is as follows. Catalyzes the transfer of phosphatidylinositol, phosphatidylcholine and sphingomyelin between membranes. Required for COPI-mediated retrograde transport from the Golgi to the endoplasmic reticulum; phosphatidylinositol and phosphatidylcholine transfer activity is essential for this function. This chain is Phosphatidylinositol transfer protein beta isoform (PITPNB), found in Bos taurus (Bovine).